The primary structure comprises 337 residues: Glyceraldehyde-3-phosphate dehydrogenase (337 aa).

NAD(+)-binding positions include 12-13, aspartate 34, and lysine 79; that span reads RI. D-glyceraldehyde 3-phosphate contacts are provided by residues 150-152, threonine 181, 210-211, and arginine 233; these read SCT and TG. The active-site Nucleophile is the cysteine 151. Asparagine 315 contributes to the NAD(+) binding site.

Belongs to the glyceraldehyde-3-phosphate dehydrogenase family. As to quaternary structure, homotetramer.

The protein localises to the cytoplasm. It carries out the reaction D-glyceraldehyde 3-phosphate + phosphate + NAD(+) = (2R)-3-phospho-glyceroyl phosphate + NADH + H(+). Its pathway is carbohydrate degradation; glycolysis; pyruvate from D-glyceraldehyde 3-phosphate: step 1/5. This Phaeosphaeria nodorum (strain SN15 / ATCC MYA-4574 / FGSC 10173) (Glume blotch fungus) protein is Glyceraldehyde-3-phosphate dehydrogenase (GPD1).